A 452-amino-acid polypeptide reads, in one-letter code: Mannan endo-1,6-alpha-mannosidase DCW1 (452 aa).

An N-terminal signal peptide occupies residues methionine 1–alanine 18. N-linked (GlcNAc...) asparagine glycosylation is found at asparagine 25, asparagine 81, asparagine 106, asparagine 130, asparagine 200, asparagine 237, asparagine 240, asparagine 262, asparagine 271, and asparagine 286. Residue glycine 431 is the site of GPI-anchor amidated glycine attachment. Residues alanine 432–leucine 452 constitute a propeptide, removed in mature form.

The protein belongs to the glycosyl hydrolase 76 family.

Its subcellular location is the cell membrane. It carries out the reaction Random hydrolysis of (1-&gt;6)-alpha-D-mannosidic linkages in unbranched (1-&gt;6)-mannans.. Its function is as follows. Probable mannosidase required for normal synthesis of the cell wall. The sequence is that of Mannan endo-1,6-alpha-mannosidase DCW1 (DCW1) from Candida albicans (strain SC5314 / ATCC MYA-2876) (Yeast).